The chain runs to 656 residues: uncharacterized protein (656 aa).

Residues 623–656 (EIDIPGTPASIDPEWSRPPGSITDDHVFDAPLHR) are disordered. A compositionally biased stretch (basic and acidic residues) spans 645–656 (TDDHVFDAPLHR).

This is an uncharacterized protein from Mycobacterium tuberculosis (strain CDC 1551 / Oshkosh).